A 211-amino-acid chain; its full sequence is Protein-L-isoaspartate O-methyltransferase (211 aa).

The active site involves S62.

It belongs to the methyltransferase superfamily. L-isoaspartyl/D-aspartyl protein methyltransferase family.

The protein localises to the cytoplasm. The catalysed reaction is [protein]-L-isoaspartate + S-adenosyl-L-methionine = [protein]-L-isoaspartate alpha-methyl ester + S-adenosyl-L-homocysteine. Catalyzes the methyl esterification of L-isoaspartyl residues in peptides and proteins that result from spontaneous decomposition of normal L-aspartyl and L-asparaginyl residues. It plays a role in the repair and/or degradation of damaged proteins. The sequence is that of Protein-L-isoaspartate O-methyltransferase from Shewanella loihica (strain ATCC BAA-1088 / PV-4).